Reading from the N-terminus, the 206-residue chain is CASP-like protein 2C1 (206 aa).

Topologically, residues 1 to 31 (MSVLGVGPRTVTPHLRKGMMESSSGISLARA) are cytoplasmic. The helical transmembrane segment at 32–52 (EAFLRLFAILVLVLTACLLGF) threads the bilayer. Residues 53-71 (DTQTKLLFSTIKKTATFRD) lie on the Extracellular side of the membrane. A helical membrane pass occupies residues 72–92 (LGALQVVVYVDSVAAGYNLLQ). At 93–111 (LGRGFISAKLKGKLINVSY) the chain is on the cytoplasmic side. The chain crosses the membrane as a helical span at residues 112 to 132 (VTLPWVCFLLDQAAVYTVFSA). At 133–161 (NTAALQASIIAVTGESSLQWMKVCNRYTR) the chain is on the extracellular side. Residues 162-182 (FCIQVGGALLSGYLASLLMVL) traverse the membrane as a helical segment. Residues 183 to 206 (LSSLSAFSLFRLYSPKQFHLLKPT) lie on the Cytoplasmic side of the membrane.

It belongs to the Casparian strip membrane proteins (CASP) family. Homodimer and heterodimers.

It localises to the cell membrane. This chain is CASP-like protein 2C1, found in Vitis vinifera (Grape).